A 151-amino-acid polypeptide reads, in one-letter code: MKVVFLKDVPGRGKTGDIKEVNDGYARNYLIPNKLAMPASAAVKSEIAAKQAAEERRKAKAEAEMVELAKNLDGAKVNLKAKTGAKDKLYGQITTTVIAAEIEKQTGKTIDKRKLELAEPIRQLGNYEVVIRFNKDLSSKINLAVTAEENT.

Belongs to the bacterial ribosomal protein bL9 family.

Its function is as follows. Binds to the 23S rRNA. The chain is Large ribosomal subunit protein bL9 from Dehalococcoides mccartyi (strain ATCC BAA-2100 / JCM 16839 / KCTC 5957 / BAV1).